The chain runs to 378 residues: Ribosomal RNA large subunit methyltransferase G (378 aa).

It belongs to the methyltransferase superfamily. RlmG family.

Its subcellular location is the cytoplasm. It carries out the reaction guanosine(1835) in 23S rRNA + S-adenosyl-L-methionine = N(2)-methylguanosine(1835) in 23S rRNA + S-adenosyl-L-homocysteine + H(+). Functionally, specifically methylates the guanine in position 1835 (m2G1835) of 23S rRNA. This chain is Ribosomal RNA large subunit methyltransferase G, found in Escherichia coli (strain ATCC 8739 / DSM 1576 / NBRC 3972 / NCIMB 8545 / WDCM 00012 / Crooks).